The chain runs to 317 residues: Succinate receptor 1 (317 aa).

Residues 1–23 (MAQNLSCENWLATEAILNKYYLS) lie on the Extracellular side of the membrane. Asparagine 4 carries an N-linked (GlcNAc...) asparagine glycan. A helical membrane pass occupies residues 24 to 47 (AFYAIEFIFGLLGNVTVVFGYLFC). The Cytoplasmic segment spans residues 48-55 (MKNWNSSN). The helical transmembrane segment at 56-76 (VYLFNLSISDFAFLCTLPILI) threads the bilayer. Residues 77–101 (KSYANDKGTYGDVLCISNRYVLHTN) are Extracellular-facing. Cysteine 91 and cysteine 168 are disulfide-bonded. Residues 102–119 (LYTSILFLTFISMDRYLL) form a helical membrane-spanning segment. Topologically, residues 120-133 (MKYPFREHFLQKKE) are cytoplasmic. A helical membrane pass occupies residues 134–157 (FAILISLAVWALVTLEVLPMLTFI). The Extracellular portion of the chain corresponds to 158–180 (NSVPKEEGSNCIDYASSGNPEHN). A helical transmembrane segment spans residues 181-204 (LIYSLCLTLLGFLIPLSVMCFFYY). Residues 205–228 (KMVVFLKRRSQQQATALPLDKPQR) lie on the Cytoplasmic side of the membrane. The helical transmembrane segment at 229-246 (LVVLAVVIFSILFTPYHI) threads the bilayer. Residues 247–277 (MRNLRIASRLDSWPQGCTQKAIKSIYTLTRP) lie on the Extracellular side of the membrane. Residues 278 to 294 (LAFLNSAINPIFYFLMG) traverse the membrane as a helical segment. At 295 to 317 (DHYREMLISKFRQYFKSLTSFRT) the chain is on the cytoplasmic side.

This sequence belongs to the G-protein coupled receptor 1 family. As to expression, predominantly expressed in the kidney (proximal and distal tubules and the juxtaglomerular apparatus). Weakly expressed in liver, spleen and small intestine. Highly expressed in immature dendritic cells, expression rapidly downregulates after maturation. Also expressed in macrophages. Specifically expressed in intestinal tuft cells. Expression in whole muscle is attributable to major non-myofibrillar resident cell types, including stromal, endothelial and satellite cell populations.

It localises to the cell membrane. Its function is as follows. G protein-coupled receptor for succinate able to mediate signaling through Gq/GNAQ or Gi/GNAI second messengers depending on the cell type and the processes regulated. Succinate-SUCNR1 signaling serves as a link between metabolic stress, inflammation and energy homeostasis. In macrophages, plays a range of immune-regulatory roles. During inflammation, succinate-SUCNR1 signaling may act as an anti-inflammatory mediator or boost inflammation depending on the inflammatory status of cells. Hyperpolarizes M2 macrophages versus M1 phenotype through Gq signaling by regulating the transcription of genes involved in immune function. In activated M1 macrophages, plays a pro-inflammatory role in response to LPS. Expressed in dendritic cells, where it is involved in the sensing of immunological danger and enhances immunity. Mediates succinate triggered intracelleular calcium mobilization, induces migratory responses and acts in synergy with Toll-like receptor ligands for the production of proinflammatory cytokines as well as an enhancement of antigen-specific activation of helper T cells. In the small intestine, mediates the activation of tuft cells by dietary succinate and triggers type 2 immunity. In adipocytes, plays an important role in the control of energy metabolism. In response to succinate, controls leptin expression in an AMPK-JNK-CEBPA-dependent as well as circadian clock-regulated manner. In muscle tissue, is expressed in non-muscle cells and coordinates muscle remodeling in response to the succinate produced during exercise training in a paracrine manner. In retina, acts as a mediator of vessel growth during retinal development. In response to succinate, regulates the production of angiogenic factors, including VEGF, by retinal ganglion neurons. In Mus musculus (Mouse), this protein is Succinate receptor 1 (Sucnr1).